The chain runs to 38 residues: MTPSLANFLWSLVYGAVVLGLLFGAIVFVSQRDRVRRR.

A helical transmembrane segment spans residues 8 to 28; the sequence is FLWSLVYGAVVLGLLFGAIVF.

The protein belongs to the PsbX family. Type 1 subfamily. In terms of assembly, PSII is composed of 1 copy each of membrane proteins PsbA, PsbB, PsbC, PsbD, PsbE, PsbF, PsbH, PsbI, PsbJ, PsbK, PsbL, PsbM, PsbT, PsbX, PsbY, PsbZ, Psb30/Ycf12, peripheral proteins PsbO, CyanoQ (PsbQ), PsbU, PsbV and a large number of cofactors. It forms dimeric complexes.

It is found in the cellular thylakoid membrane. Its function is as follows. Involved in the binding and/or turnover of quinones at the Q(B) site of photosystem II (PSII). PSII is a light-driven water plastoquinone oxidoreductase, using light energy to abstract electrons from H(2)O, generating a proton gradient subsequently used for ATP formation. The sequence is that of Photosystem II reaction center protein X 2 from Synechococcus sp. (strain JA-3-3Ab) (Cyanobacteria bacterium Yellowstone A-Prime).